We begin with the raw amino-acid sequence, 260 residues long: uncharacterized protein (260 aa).

The protein belongs to the methyltransferase superfamily.

It localises to the cytoplasm. It is found in the nucleus. Its function is as follows. Probable methyltransferase. This is an uncharacterized protein from Schizosaccharomyces pombe (strain 972 / ATCC 24843) (Fission yeast).